The sequence spans 708 residues: Polyribonucleotide nucleotidyltransferase (708 aa).

Residues aspartate 488 and aspartate 494 each contribute to the Mg(2+) site. The region spanning 555–615 (PIIKVTKVDP…ENVDKAIELI (61 aa)) is the KH domain. An S1 motif domain is found at 625–692 (GEVLEGKVTR…DLGRLQFKRV (68 aa)).

The protein belongs to the polyribonucleotide nucleotidyltransferase family. Requires Mg(2+) as cofactor.

The protein resides in the cytoplasm. It carries out the reaction RNA(n+1) + phosphate = RNA(n) + a ribonucleoside 5'-diphosphate. Functionally, involved in mRNA degradation. Catalyzes the phosphorolysis of single-stranded polyribonucleotides processively in the 3'- to 5'-direction. The chain is Polyribonucleotide nucleotidyltransferase from Thermotoga petrophila (strain ATCC BAA-488 / DSM 13995 / JCM 10881 / RKU-1).